The chain runs to 1323 residues: DNA-directed RNA polymerase subunit beta' (1323 aa).

4 residues coordinate Zn(2+): Cys60, Cys62, Cys75, and Cys78. Residues Asp535, Asp537, and Asp539 each coordinate Mg(2+). Residues Cys894, Cys977, Cys984, and Cys987 each coordinate Zn(2+).

Belongs to the RNA polymerase beta' chain family. In terms of assembly, the RNAP catalytic core consists of 2 alpha, 1 beta, 1 beta' and 1 omega subunit. When a sigma factor is associated with the core the holoenzyme is formed, which can initiate transcription. The cofactor is Mg(2+). Zn(2+) is required as a cofactor.

It carries out the reaction RNA(n) + a ribonucleoside 5'-triphosphate = RNA(n+1) + diphosphate. DNA-dependent RNA polymerase catalyzes the transcription of DNA into RNA using the four ribonucleoside triphosphates as substrates. This Corynebacterium jeikeium (strain K411) protein is DNA-directed RNA polymerase subunit beta'.